A 101-amino-acid chain; its full sequence is UPF0473 protein LAF_0524 (101 aa).

This sequence belongs to the UPF0473 family.

The polypeptide is UPF0473 protein LAF_0524 (Limosilactobacillus fermentum (strain NBRC 3956 / LMG 18251) (Lactobacillus fermentum)).